The following is a 500-amino-acid chain: Ribose import ATP-binding protein RbsA (500 aa).

ABC transporter domains lie at 6–242 (LALS…VGRK) and 252–495 (AQQG…VGRN). Position 38–45 (38–45 (GENGAGKS)) interacts with ATP.

Belongs to the ABC transporter superfamily. Ribose importer (TC 3.A.1.2.1) family. In terms of assembly, the complex is composed of an ATP-binding protein (RbsA), two transmembrane proteins (RbsC) and a solute-binding protein (RbsB).

The protein localises to the cell inner membrane. The enzyme catalyses D-ribose(out) + ATP + H2O = D-ribose(in) + ADP + phosphate + H(+). Its function is as follows. Part of the ABC transporter complex RbsABC involved in ribose import. Responsible for energy coupling to the transport system. The protein is Ribose import ATP-binding protein RbsA of Vibrio cholerae serotype O1 (strain ATCC 39315 / El Tor Inaba N16961).